Consider the following 331-residue polypeptide: MAVFTAVTEPQLAEWMSHYDLGDVVEFRGISSGIENSNFFLTTTRGEYVLTIFEKLTAEQLPFYLDLMRHLAAHRVPVPDPMPREDGALFGTLHGKPAAIVTKLEGAPELAPGVEHCIEVGQMLARMHLAGRDYTGYQPNLRSLPWWRETVPTILPFLQGEQRELLSSELAHQEAFFASADYAALPEGPCHADLFRDNAMFAHAAPDTGHEVRLGGFFDFYFAGCDKWLFDVAVTVNDWCVDLATGKLDNARTEAMLRAYQTVRPFTAEENRHWGDMLRAGAYRFWVSRLYDFYLPRAAELLKPHDPGHFERILRERLTGVALPGIHTSCN.

It belongs to the pseudomonas-type ThrB family.

The enzyme catalyses L-homoserine + ATP = O-phospho-L-homoserine + ADP + H(+). Its pathway is amino-acid biosynthesis; L-threonine biosynthesis; L-threonine from L-aspartate: step 4/5. This Paraburkholderia phytofirmans (strain DSM 17436 / LMG 22146 / PsJN) (Burkholderia phytofirmans) protein is Homoserine kinase.